The chain runs to 476 residues: Adenosylhomocysteinase (476 aa).

Substrate contacts are provided by Thr67, Asp142, and Glu202. 203–205 lines the NAD(+) pocket; that stretch reads TTT. Positions 232 and 236 each coordinate substrate. NAD(+)-binding positions include Asn237, 266-271, Glu289, Asn324, 345-347, and Asn390; these read GYGDVG and IGH.

The protein belongs to the adenosylhomocysteinase family. NAD(+) is required as a cofactor.

It is found in the cytoplasm. The catalysed reaction is S-adenosyl-L-homocysteine + H2O = L-homocysteine + adenosine. Its pathway is amino-acid biosynthesis; L-homocysteine biosynthesis; L-homocysteine from S-adenosyl-L-homocysteine: step 1/1. Its function is as follows. May play a key role in the regulation of the intracellular concentration of adenosylhomocysteine. This Synechococcus sp. (strain CC9311) protein is Adenosylhomocysteinase.